Reading from the N-terminus, the 1139-residue chain is Protein lin-25 (1139 aa).

Residues 695–701 (IKKKKDP) carry the Nuclear localization signal motif.

In terms of tissue distribution, expressed in seam cells and all six vulva precursor cells (VPC). After VPC division, expression is restricted to descendants of the VPC cell lineages P5.p, P6.p and P7.p (at protein level).

The protein resides in the nucleus. Its subcellular location is the cytoplasm. In terms of biological role, participates in the inductive signaling pathway downstream of let-60 Ras and the RAF/MAP kinase cascade to regulate specification and differentiation of many cell types. Positively regulates the fate of vulval precursor cells. Required for induction of the P12 and excretory duct cell fates. In males, it is also required for proper formation of spicules. Does not function in the signaling pathway that promotes exit from pachytene. Plays a role in responses to M.nematophilum-mediated bacterial infection by promoting tail swelling and preventing constipation. The polypeptide is Protein lin-25 (lin-25) (Caenorhabditis elegans).